The sequence spans 252 residues: Imidazole glycerol phosphate synthase subunit HisF (252 aa).

Active-site residues include Asp11 and Asp130.

It belongs to the HisA/HisF family. In terms of assembly, heterodimer of HisH and HisF.

Its subcellular location is the cytoplasm. The catalysed reaction is 5-[(5-phospho-1-deoxy-D-ribulos-1-ylimino)methylamino]-1-(5-phospho-beta-D-ribosyl)imidazole-4-carboxamide + L-glutamine = D-erythro-1-(imidazol-4-yl)glycerol 3-phosphate + 5-amino-1-(5-phospho-beta-D-ribosyl)imidazole-4-carboxamide + L-glutamate + H(+). It functions in the pathway amino-acid biosynthesis; L-histidine biosynthesis; L-histidine from 5-phospho-alpha-D-ribose 1-diphosphate: step 5/9. Its function is as follows. IGPS catalyzes the conversion of PRFAR and glutamine to IGP, AICAR and glutamate. The HisF subunit catalyzes the cyclization activity that produces IGP and AICAR from PRFAR using the ammonia provided by the HisH subunit. In Staphylococcus epidermidis (strain ATCC 12228 / FDA PCI 1200), this protein is Imidazole glycerol phosphate synthase subunit HisF.